We begin with the raw amino-acid sequence, 556 residues long: MQFDYIIIGAGSAGNVLATRLTEDPNTTVLLLEAGGPDYRFDFRTQMPAALAFPLQGKRYNWAYETEPEPFMNNRRMECGRGKGLGGSSLINGMCYIRGNALDLDNWAQEPSLENWSYLDCLPYYRKAETRDVGENDYHGGDGPVSVTTSKPGVNPLFEAMIEAGMQAGYPRTDDLNGYQQEGFGPMDRTVTPHGRRASTARGYLDQAKSRPNLTIRTHAMTDHIIFDGKRAVGVEWLEGDSTIPTRAAANKEVLLCAGAIASPQILQRSGVGNAELLAEFDIPLVHELPGVGENLQDHLEMYLQYECKEPVSLYPALQWWNQPRIGAEWLFGGTGVGASNHFEAGGFIRSREEFAWPNIQYHFLPVAINYNGSNAVKEHGFQCHVGSMRSPSRGHVRIKSRDPHQHPGILFNYMSHEQDWQEFRDAIRITREIMHQPALDQYRGREISPGVECQTDEQLDEFVRNHAETAFHPCGTCKMGYDEMAVVDGEGRVHGLEGLRVVDASIMPQIITGNLNATTIMIGEKIADMIRGKEALPRSTAGYFVANGMPVRAKK.

Position 4–33 (Asp-4–Glu-33) interacts with FAD. Catalysis depends on His-473, which acts as the Proton acceptor.

Belongs to the GMC oxidoreductase family. The cofactor is FAD.

It is found in the cell membrane. It carries out the reaction choline + A = betaine aldehyde + AH2. The enzyme catalyses betaine aldehyde + NAD(+) + H2O = glycine betaine + NADH + 2 H(+). It functions in the pathway amine and polyamine biosynthesis; betaine biosynthesis via choline pathway; betaine aldehyde from choline (cytochrome c reductase route): step 1/1. Functionally, involved in the biosynthesis of the osmoprotectant glycine betaine. Catalyzes the oxidation of choline to betaine aldehyde and betaine aldehyde to glycine betaine at the same rate. In Escherichia coli O6:H1 (strain CFT073 / ATCC 700928 / UPEC), this protein is Oxygen-dependent choline dehydrogenase.